The chain runs to 309 residues: Manganese ABC transporter substrate-binding lipoprotein PsaA (309 aa).

An N-terminal signal peptide occupies residues 1 to 19 (MKKLGTLFVLFLSVIVLVA). Cys20 carries N-palmitoyl cysteine lipidation. A lipid anchor (S-diacylglycerol cysteine) is attached at Cys20. Mn(2+) is bound by residues His67, His139, Glu205, and Asp280.

It belongs to the bacterial solute-binding protein 9 family. Lipoprotein receptor antigen (Lrai) subfamily.

It localises to the cell membrane. Part of the ATP-riven (ABC) transport system PsaABC involved in manganese import. Binds manganese with high affinity and specificity and delivers it to the membrane permease for translocation into the cytoplasm. Also acts as an adhesin which is involved on adherence to extracellular matrix. The polypeptide is Manganese ABC transporter substrate-binding lipoprotein PsaA (psaA) (Streptococcus mitis).